The primary structure comprises 239 residues: MEEIRAWRHVFKLDPNKPIDDERLERLCESGTDAVIVGGTDGVTIDNVLDLLARIRRFSVPCALEVTDVEALTPGFDVYLVPIVLNSRQAEWIIGRHHEAVKQYGDMMNWDEIAAEGYCILNPECKAAKLTRADTELDVDDIVAYARLAEHLYKLPIFYLEYSGVYGDPSVVEKVKQALDQTQLFYGGGITTPEQAEHMARYADTVVVGNAIYDAFEQALATVAAVKQMAGQRNGDDGK.

A sn-glycerol 1-phosphate-binding site is contributed by Lys-12. Positions 14 and 40 each coordinate Mg(2+). Residues 159–164, Gly-189, and 209–210 each bind sn-glycerol 1-phosphate; these read YLEYSG and GN.

It belongs to the GGGP/HepGP synthase family. Group I subfamily. As to quaternary structure, homodimer. Mg(2+) is required as a cofactor.

The catalysed reaction is sn-glycerol 1-phosphate + all-trans-heptaprenyl diphosphate = 3-heptaprenyl-sn-glycero-1-phosphate + diphosphate. Its pathway is membrane lipid metabolism; glycerophospholipid metabolism. Prenyltransferase that catalyzes in vivo the transfer of the heptaprenyl moiety of heptaprenyl pyrophosphate (HepPP; 35 carbon atoms) to the C3 hydroxyl of sn-glycerol-1-phosphate (G1P), producing heptaprenylglyceryl phosphate (HepGP). This reaction is an ether-bond-formation step in the biosynthesis of archaea-type G1P-based membrane lipids found in Bacillales. To a much lesser extent, is also able to use geranylgeranyl diphosphate (GGPP; C20) as the prenyl donor. The protein is Heptaprenylglyceryl phosphate synthase of Geobacillus kaustophilus (strain HTA426).